The primary structure comprises 110 residues: UPF0060 membrane protein MMAR_2961 (110 aa).

4 helical membrane-spanning segments follow: residues 6 to 26 (ILLFIVAAVAEIGGAWLVWQG), 32 to 52 (GLAWIGAGVIALGLYGFVATL), 61 to 81 (ILAAYGGIFVAGSLLWGMAFD), and 90 to 110 (IVGALVCLAGVGVIMYAPRAH).

It belongs to the UPF0060 family.

Its subcellular location is the cell membrane. The chain is UPF0060 membrane protein MMAR_2961 from Mycobacterium marinum (strain ATCC BAA-535 / M).